The chain runs to 153 residues: uncharacterized protein (153 aa).

A signal peptide spans M1–A18. N-linked (GlcNAc...) asparagine glycosylation is found at N19 and N25. At N19 to T43 the chain is on the extracellular side. The helical transmembrane segment at L44–F64 threads the bilayer. At H65–S153 the chain is on the cytoplasmic side. The tract at residues K75–Q115 is disordered. Residues E77–H96 show a composition bias toward basic and acidic residues.

Its subcellular location is the membrane. This is an uncharacterized protein from Xenopus tropicalis (Western clawed frog).